We begin with the raw amino-acid sequence, 150 residues long: Small ribosomal subunit protein uS15 (150 aa).

Over residues 1–10 (MPHRSRHKRG) the composition is skewed to basic residues. Residues 1–21 (MPHRSRHKRGSSGSVRPATKT) form a disordered region.

Belongs to the universal ribosomal protein uS15 family. Part of the 30S ribosomal subunit.

The protein is Small ribosomal subunit protein uS15 of Caldivirga maquilingensis (strain ATCC 700844 / DSM 13496 / JCM 10307 / IC-167).